A 179-amino-acid polypeptide reads, in one-letter code: MYEYLDRRYALALYEVAEENNKVDEYLRDLKEVVNIIKNSEDICKILKHPEINTSRKKEIFTELFKDKVDDKILSFLLVLIEKDRILYLEEKLKEMEKIYLEKNNMISANVKTVIPLLKEEREELIEKLGNKYNKKIILEEEIDKSIIGGVYVRVGDDVLDGTLSTRLKDIKKMMLKRE.

It belongs to the ATPase delta chain family. In terms of assembly, F-type ATPases have 2 components, F(1) - the catalytic core - and F(0) - the membrane proton channel. F(1) has five subunits: alpha(3), beta(3), gamma(1), delta(1), epsilon(1). F(0) has three main subunits: a(1), b(2) and c(10-14). The alpha and beta chains form an alternating ring which encloses part of the gamma chain. F(1) is attached to F(0) by a central stalk formed by the gamma and epsilon chains, while a peripheral stalk is formed by the delta and b chains.

It is found in the cell membrane. Functionally, f(1)F(0) ATP synthase produces ATP from ADP in the presence of a proton or sodium gradient. F-type ATPases consist of two structural domains, F(1) containing the extramembraneous catalytic core and F(0) containing the membrane proton channel, linked together by a central stalk and a peripheral stalk. During catalysis, ATP synthesis in the catalytic domain of F(1) is coupled via a rotary mechanism of the central stalk subunits to proton translocation. In terms of biological role, this protein is part of the stalk that links CF(0) to CF(1). It either transmits conformational changes from CF(0) to CF(1) or is implicated in proton conduction. The polypeptide is ATP synthase subunit delta (Clostridium botulinum (strain Langeland / NCTC 10281 / Type F)).